Reading from the N-terminus, the 260-residue chain is Uroplakin-1b (260 aa).

Residues 2 to 15 (AKDDSTVRCFQGLL) are Cytoplasmic-facing. The helical transmembrane segment at 16-36 (IFGNVIIGMCSIALMAECIFF) threads the bilayer. Over 37–60 (VSDQNSLYPLLEATNNDDIYAAAW) the chain is Extracellular. Residues 61–81 (IGMFVGICLFCLSVLGIVGIM) form a helical membrane-spanning segment. Topologically, residues 82–86 (KSNRK) are cytoplasmic. A helical transmembrane segment spans residues 87-107 (ILLVYFILMFIVYAFEVASCI). Over 108–229 (TAATQRDFFT…ELISGPMNRH (122 aa)) the chain is Extracellular. A helical membrane pass occupies residues 230–250 (AWGVAWFGFAILCWTFWVLLG). At 251 to 260 (TMFYWSRIDY) the chain is on the cytoplasmic side.

It belongs to the tetraspanin (TM4SF) family. As to quaternary structure, heterodimer with uroplakin-3A (UPK3A) or uroplakin-3B (UPK3B). Post-translationally, N-glycosylated with high-mannose oligosaccharides. In terms of tissue distribution, bladder epithelium.

The protein resides in the membrane. Its function is as follows. Component of the asymmetric unit membrane (AUM); a highly specialized biomembrane elaborated by terminally differentiated urothelial cells. May play an important role in normal bladder epithelial physiology, possibly in regulating membrane permeability of superficial umbrella cells or in stabilizing the apical membrane through AUM/cytoskeletal interactions. The chain is Uroplakin-1b (UPK1B) from Bos taurus (Bovine).